Reading from the N-terminus, the 579-residue chain is ATP-dependent RNA helicase ROK1 (579 aa).

Positions 1–99 are disordered; sequence MDIFRVLTRG…DHADDETELS (99 aa). The span at 45-59 shows a compositional bias: basic and acidic residues; that stretch reads ARDEQQLTKELDFFR. A compositionally biased stretch (acidic residues) spans 76–97; it reads GEDEVQEDNQEEDEDHADDETE. The Q motif motif lies at 133–161; the sequence is DLITRFQFDKRLLNNLIENNFTEPTPIQS. The Helicase ATP-binding domain occupies 164-344; sequence IPILLHERDM…QTIMNDPIRV (181 aa). 177 to 184 is an ATP binding site; sequence APTGSGKT. Residues 291 to 294 carry the DEAD box motif; that stretch reads DEAD. The Helicase C-terminal domain maps to 355–517; it reads NIDQQLVFCG…EVSEWMQKIS (163 aa). Basic and acidic residues predominate over residues 520 to 538; sequence SKREKESLKKGKGHVERKQ. The disordered stretch occupies residues 520 to 579; sequence SKREKESLKKGKGHVERKQISTVPKVVKQKKRQRREMIEASKKRKLSVSDAEEEAGNDST. The span at 569 to 579 shows a compositional bias: acidic residues; the sequence is DAEEEAGNDST.

This sequence belongs to the DEAD box helicase family. DDX52/ROK1 subfamily. In terms of assembly, interacts with the U3 snoRNA and is associated with the 90S and 40S pre-ribosomes.

The protein resides in the nucleus. It localises to the nucleolus. It carries out the reaction ATP + H2O = ADP + phosphate + H(+). In terms of biological role, ATP-dependent RNA helicase involved in 40S ribosomal subunit biogenesis. Required for the processing and cleavage of 35S pre-rRNA at sites A0, A1, and A2, leading to mature 18S rRNA. This is ATP-dependent RNA helicase ROK1 (ROK1) from Kluyveromyces lactis (strain ATCC 8585 / CBS 2359 / DSM 70799 / NBRC 1267 / NRRL Y-1140 / WM37) (Yeast).